The primary structure comprises 186 residues: piRNA-mediated silencing protein C19orf84 (186 aa).

Disordered stretches follow at residues 1–42 and 89–186; these read MEQP…NSTD and SQAG…ETEY. The span at 13 to 22 shows a compositional bias: polar residues; sequence NNLSLPSSGT. A compositionally biased stretch (pro residues) spans 24–36; that stretch reads PWPPAPLPAPPPL. Residues 114–126 show a composition bias toward basic residues; it reads RPGWGRGLHRRGL. Residues 145-157 show a composition bias toward pro residues; sequence RTPPMTLPSPPTL.

In terms of assembly, interacts with SPOCD1.

Its subcellular location is the nucleus. The protein localises to the nucleoplasm. Functionally, protein adapter involved in piRNA-directed transposon methylation by connecting PIWIL4-piRNA and DNA methylation machineries. The PIWIL4-piRNA pathway plays a central role during spermatogenesis by directing transposon DNA methylation and silencing, thereby preventing their mobilization, which is essential for the germline integrity. This is piRNA-mediated silencing protein C19orf84 from Homo sapiens (Human).